The primary structure comprises 505 residues: Putative thymidine phosphorylase (505 aa).

It belongs to the thymidine/pyrimidine-nucleoside phosphorylase family. Type 2 subfamily.

The catalysed reaction is thymidine + phosphate = 2-deoxy-alpha-D-ribose 1-phosphate + thymine. The protein is Putative thymidine phosphorylase of Hahella chejuensis (strain KCTC 2396).